The primary structure comprises 916 residues: DNA mismatch repair protein MutS (916 aa).

The segment at 1–47 (MSEALSVPAAEGENTVTASESPDLAATSARAEKVGKQEKPEKAEKQS) is disordered. Basic and acidic residues predominate over residues 30–45 (RAEKVGKQEKPEKAEK). 656 to 663 (GPNMGGKS) is a binding site for ATP. Over residues 843–861 (ADATPTPQMDLFSAQSSPS) the composition is skewed to polar residues. The tract at residues 843-880 (ADATPTPQMDLFSAQSSPSADDEDDKSAGQSAVPPAQA) is disordered.

It belongs to the DNA mismatch repair MutS family.

This protein is involved in the repair of mismatches in DNA. It is possible that it carries out the mismatch recognition step. This protein has a weak ATPase activity. This chain is DNA mismatch repair protein MutS, found in Cupriavidus metallidurans (strain ATCC 43123 / DSM 2839 / NBRC 102507 / CH34) (Ralstonia metallidurans).